The primary structure comprises 95 residues: Aspartyl/glutamyl-tRNA(Asn/Gln) amidotransferase subunit C (95 aa).

It belongs to the GatC family. As to quaternary structure, heterotrimer of A, B and C subunits.

The enzyme catalyses L-glutamyl-tRNA(Gln) + L-glutamine + ATP + H2O = L-glutaminyl-tRNA(Gln) + L-glutamate + ADP + phosphate + H(+). It carries out the reaction L-aspartyl-tRNA(Asn) + L-glutamine + ATP + H2O = L-asparaginyl-tRNA(Asn) + L-glutamate + ADP + phosphate + 2 H(+). In terms of biological role, allows the formation of correctly charged Asn-tRNA(Asn) or Gln-tRNA(Gln) through the transamidation of misacylated Asp-tRNA(Asn) or Glu-tRNA(Gln) in organisms which lack either or both of asparaginyl-tRNA or glutaminyl-tRNA synthetases. The reaction takes place in the presence of glutamine and ATP through an activated phospho-Asp-tRNA(Asn) or phospho-Glu-tRNA(Gln). This Dehalococcoides mccartyi (strain ATCC BAA-2100 / JCM 16839 / KCTC 5957 / BAV1) protein is Aspartyl/glutamyl-tRNA(Asn/Gln) amidotransferase subunit C.